The following is a 193-amino-acid chain: Probable thymidylate kinase (193 aa).

7–14 serves as a coordination point for ATP; it reads GIDGAGKT.

Belongs to the thymidylate kinase family.

The catalysed reaction is dTMP + ATP = dTDP + ADP. The polypeptide is Probable thymidylate kinase (tmk) (Thermoplasma acidophilum (strain ATCC 25905 / DSM 1728 / JCM 9062 / NBRC 15155 / AMRC-C165)).